Here is a 364-residue protein sequence, read N- to C-terminus: Probable dual-specificity RNA methyltransferase RlmN (364 aa).

Glutamate 106 acts as the Proton acceptor in catalysis. Residues 112 to 350 form the Radical SAM core domain; it reads YPQRNTVCIS…SCTVRDTRGR (239 aa). A disulfide bond links cysteine 119 and cysteine 356. Cysteine 126, cysteine 130, and cysteine 133 together coordinate [4Fe-4S] cluster. Residues 177 to 178, serine 211, 234 to 236, and asparagine 313 each bind S-adenosyl-L-methionine; these read GE and SLH. The active-site S-methylcysteine intermediate is cysteine 356.

This sequence belongs to the radical SAM superfamily. RlmN family. It depends on [4Fe-4S] cluster as a cofactor.

It localises to the cytoplasm. It carries out the reaction adenosine(2503) in 23S rRNA + 2 reduced [2Fe-2S]-[ferredoxin] + 2 S-adenosyl-L-methionine = 2-methyladenosine(2503) in 23S rRNA + 5'-deoxyadenosine + L-methionine + 2 oxidized [2Fe-2S]-[ferredoxin] + S-adenosyl-L-homocysteine. The catalysed reaction is adenosine(37) in tRNA + 2 reduced [2Fe-2S]-[ferredoxin] + 2 S-adenosyl-L-methionine = 2-methyladenosine(37) in tRNA + 5'-deoxyadenosine + L-methionine + 2 oxidized [2Fe-2S]-[ferredoxin] + S-adenosyl-L-homocysteine. Specifically methylates position 2 of adenine 2503 in 23S rRNA and position 2 of adenine 37 in tRNAs. The polypeptide is Probable dual-specificity RNA methyltransferase RlmN (Mycobacterium ulcerans (strain Agy99)).